The primary structure comprises 776 residues: Rho guanine nucleotide exchange factor 6 (776 aa).

Residues 1 to 111 form the Calponin-homology (CH) domain; it reads MNPEEQIVTW…TLLAVNKATE (111 aa). The segment at 115-151 is disordered; it reads SERPCGRSSSLSAANTSQTNPQGAVSSTVSGLQRQSK. A compositionally biased stretch (polar residues) spans 121 to 151; that stretch reads RSSSLSAANTSQTNPQGAVSSTVSGLQRQSK. Ser126 carries the post-translational modification Phosphoserine. Thr133 carries the post-translational modification Phosphothreonine. Phosphoserine occurs at positions 144 and 150. The SH3 domain occupies 160–219; the sequence is SHQLIVKARFNFKQTNEDELSVCKGDIIYVTRVEEGGWWEGTLNGRTGWFPSNYVREIKS. Phosphoserine is present on Ser225. Residues 241–421 enclose the DH domain; the sequence is YYTVVLQNIL…KTLMGQCQDL (181 aa). Residues 443 to 548 form the PH domain; the sequence is DIKNLGNVIF…WLEQLNRLIR (106 aa). Phosphoserine is present on Ser488. Residues 561–572 are compositionally biased toward low complexity; sequence SSSCSAHSSFSS. The tract at residues 561 to 581 is disordered; the sequence is SSSCSAHSSFSSTGQPRGPLE. Ser640 and Ser684 each carry phosphoserine.

As to quaternary structure, interacts with PAK kinases through the SH3 domain. Interacts with GIT1. Component of cytoplasmic complexes, which also contain PXN, GIT1 and PAK1. Interacts with PARVB. Interacts with BIN2. Identified in a complex with BIN2 and GIT2. Interacts with PARVG; the guanine nucleotide exchange factor activity of ARHGEF6 is essential for PARVG-induced enhancement of cell spreading. In terms of tissue distribution, ubiquitous.

The protein localises to the cell projection. The protein resides in the lamellipodium. In terms of biological role, acts as a RAC1 guanine nucleotide exchange factor (GEF). The chain is Rho guanine nucleotide exchange factor 6 (ARHGEF6) from Homo sapiens (Human).